The primary structure comprises 708 residues: Solute carrier family 15 member 1 (708 aa).

The chain crosses the membrane as a helical span at residues 1-21 (MGMSKSHSFFGYPLSIFFIVV). The Extracellular portion of the chain corresponds to 22–53 (NEFCERFSYYGMRAILILYFTNFISWDDNLST). N-linked (GlcNAc...) asparagine glycosylation is present at Asn-50. A helical membrane pass occupies residues 54 to 74 (AIYHTFVALCYLTPILGALIA). Residues 75 to 82 (DSWLGKFK) are Cytoplasmic-facing. The chain crosses the membrane as a helical span at residues 83 to 103 (TIVSLSIVYTIGQAVTSVSSI). Residues 104–118 (NDLTDHNHDGTPDSL) lie on the Extracellular side of the membrane. The chain crosses the membrane as a helical span at residues 119–139 (PVHVVLSLIGLALIALGTGGI). Residues 140 to 161 (KPCVSAFGGDQFEEGQEKQRNR) are Cytoplasmic-facing. A helical membrane pass occupies residues 162 to 182 (FFSIFYLAINAGSLLSTIITP). The Extracellular portion of the chain corresponds to 183–198 (MLRVQQCGIHSKQACY). The helical transmembrane segment at 199–219 (PLAFGVPAALMAVALIVFVLG) threads the bilayer. Over 220–276 (SGMYKKFKPQGNIMGKVAKCIGFAIKNRFRHRSKAFPKREHWLDWAKEKYDERLISQ) the chain is Cytoplasmic. Residues 277-297 (IKMVTRVMFLYIPLPMFWALF) traverse the membrane as a helical segment. Over 298–327 (DQQGSRWTLQATTMSGKIGALEIQPDQMQT) the chain is Extracellular. The helical transmembrane segment at 328–348 (VNAILIVIMVPIFDAVLYPLI) threads the bilayer. Residues 349 to 361 (AKCGFNFTSLKKM) are Cytoplasmic-facing. The chain crosses the membrane as a helical span at residues 362 to 382 (AVGMVLASMAFVVAAIVQVEI). At 383-584 (DKTLPVFPKG…SANTVNMALQ (202 aa)) the chain is on the extracellular side. Positions 383–584 (DKTLPVFPKG…SANTVNMALQ (202 aa)) are extracellular domain (ECD). N-linked (GlcNAc...) asparagine glycans are attached at residues Asn-404, Asn-408, Asn-439, Asn-509, Asn-514, and Asn-562. Residues 585-605 (IPQYFLLTCGEVVFSVTGLEF) form a helical membrane-spanning segment. The Cytoplasmic segment spans residues 606-619 (SYSQAPSNMKSVLQ). Residues 620 to 640 (AGWLLTVAVGNIIVLIVAGAG) traverse the membrane as a helical segment. The Extracellular portion of the chain corresponds to 641–645 (QFSKQ). Residues 646–666 (WAEYILFAALLLVVCVIFAIM) form a helical membrane-spanning segment. The Cytoplasmic portion of the chain corresponds to 667-708 (ARFYTYINPAEIEAQFDEDEKKNRLEKSNPYFMSGANSQKQM).

This sequence belongs to the major facilitator superfamily. Proton-dependent oligopeptide transporter (POT/PTR) (TC 2.A.17) family. As to quaternary structure, interacts (via extracellular domain region) with trypsin. In terms of tissue distribution, expressed in small intestine.

The protein localises to the apical cell membrane. The catalysed reaction is a dipeptide(out) + H(+)(out) = a dipeptide(in) + H(+)(in). The enzyme catalyses an L-amino acid tripeptide(out) + H(+)(out) = an L-amino acid tripeptide(in) + H(+)(in). It carries out the reaction L-alanyl-L-lysine(out) + H(+)(out) = L-alanyl-L-lysine(in) + H(+)(in). It catalyses the reaction L-alanyl-L-proline(out) + H(+)(out) = L-alanyl-L-proline(in) + H(+)(in). The catalysed reaction is L-alanyl-L-valine(out) + H(+)(out) = L-alanyl-L-valine(in) + H(+)(in). The enzyme catalyses carnosine(out) + H(+)(out) = carnosine(in) + H(+)(in). It carries out the reaction glycyl-L-glutamine(out) + H(+)(out) = glycyl-L-glutamine(in) + H(+)(in). It catalyses the reaction glycyl-L-leucine(out) + H(+)(out) = glycyl-L-leucine(in) + H(+)(in). The catalysed reaction is glycyl-L-proline(out) + H(+)(out) = glycyl-L-proline(in) + H(+)(in). The enzyme catalyses glycyl-sarcosine(out) + H(+)(out) = glycyl-sarcosine(in) + H(+)(in). It carries out the reaction L-leucyl-L-leucine(out) + H(+)(out) = L-leucyl-L-leucine(in) + H(+)(in). It catalyses the reaction L-leucyl-L-proline(out) + H(+)(out) = L-leucyl-L-proline(in) + H(+)(in). The catalysed reaction is L-phenylalanyl-L-leucine(out) + H(+)(out) = L-phenylalanyl-L-leucine(in) + H(+)(in). The enzyme catalyses L-phenylalanyl-L-phenylalanine(out) + H(+)(out) = L-phenylalanyl-L-phenylalanine(in) + H(+)(in). It carries out the reaction L-lysyl-glycine(out) + H(+)(out) = L-lysyl-glycine(in) + H(+)(in). It catalyses the reaction L-tyrosylglycine(out) + H(+)(out) = L-tyrosylglycine(in) + H(+)(in). The catalysed reaction is L-alanyl-L-aspartate(out) + 2 H(+)(out) = L-alanyl-L-aspartate(in) + 2 H(+)(in). The enzyme catalyses L-aspartyl-glycine(out) + 2 H(+)(out) = L-aspartyl-glycine(in) + 2 H(+)(in). It carries out the reaction glycyl-L-aspartate(out) + 2 H(+)(out) = glycyl-L-aspartate(in) + 2 H(+)(in). It catalyses the reaction glycyl-L-glutamate(out) + 2 H(+)(out) = glycyl-L-glutamate(in) + 2 H(+)(in). The catalysed reaction is L-alanyl-L-leucyl-L-alanine(out) + H(+)(out) = L-alanyl-L-leucyl-L-alanine(in) + H(+)(in). The enzyme catalyses L-alanyl-L-prolylglycine(out) + H(+)(out) = L-alanyl-L-prolylglycine(in) + H(+)(in). It carries out the reaction glycylglycyl-L-isoleucine(out) + H(+)(out) = glycylglycyl-L-isoleucine(in) + H(+)(in). It catalyses the reaction glycylglycyl-L-proline(out) + H(+)(out) = glycylglycyl-L-proline(in) + H(+)(in). The catalysed reaction is L-methionyl-L-phenylalanyl-L-methionine(out) + H(+)(out) = L-methionyl-L-phenylalanyl-L-methionine(in) + H(+)(in). The enzyme catalyses N-acetyl-D-muramoyl-L-alanyl-D-isoglutamine(out) + 2 H(+)(out) = N-acetyl-D-muramoyl-L-alanyl-D-isoglutamine(in) + 2 H(+)(in). It carries out the reaction N(alpha)-formyl-L-methionyl-L-leucyl-L-phenylalanine(out) + 2 H(+)(out) = N(alpha)-formyl-L-methionyl-L-leucyl-L-phenylalanine(in) + 2 H(+)(in). Its function is as follows. Electrogenic proton-coupled amino-acid transporter that transports oligopeptides of 2 to 4 amino acids with a preference for dipeptides. Transports neutral and monovalently charged peptides with a proton to peptide stoichiometry of 1:1 or 2:1. Primarily responsible for the absorption of dietary di- and tripeptides from the small intestinal lumen. Mediates transepithelial transport of muramyl and N-formylated bacterial dipeptides contributing to recognition of pathogenic bacteria by the mucosal immune system. The sequence is that of Solute carrier family 15 member 1 from Homo sapiens (Human).